Here is a 484-residue protein sequence, read N- to C-terminus: ATP synthase subunit beta (484 aa).

152–159 contributes to the ATP binding site; sequence GGAGVGKT.

The protein belongs to the ATPase alpha/beta chains family. In terms of assembly, F-type ATPases have 2 components, CF(1) - the catalytic core - and CF(0) - the membrane proton channel. CF(1) has five subunits: alpha(3), beta(3), gamma(1), delta(1), epsilon(1). CF(0) has three main subunits: a(1), b(2) and c(9-12). The alpha and beta chains form an alternating ring which encloses part of the gamma chain. CF(1) is attached to CF(0) by a central stalk formed by the gamma and epsilon chains, while a peripheral stalk is formed by the delta and b chains.

It is found in the cell inner membrane. It carries out the reaction ATP + H2O + 4 H(+)(in) = ADP + phosphate + 5 H(+)(out). In terms of biological role, produces ATP from ADP in the presence of a proton gradient across the membrane. The catalytic sites are hosted primarily by the beta subunits. This chain is ATP synthase subunit beta, found in Campylobacter lari (strain RM2100 / D67 / ATCC BAA-1060).